Reading from the N-terminus, the 316-residue chain is HPr kinase/phosphorylase (316 aa).

Catalysis depends on residues H146 and K167. ATP is bound at residue 161-168 (GESGLGKS). Residue S168 participates in Mg(2+) binding. D185 serves as the catalytic Proton acceptor; for phosphorylation activity. Proton donor; for dephosphorylation activity. The interval 209–218 (LEVRGIGLLD) is important for the catalytic mechanism of both phosphorylation and dephosphorylation. E210 serves as a coordination point for Mg(2+). Residue R252 is part of the active site. The interval 273–278 (QVEAGR) is important for the catalytic mechanism of dephosphorylation.

The protein belongs to the HPrK/P family. Homohexamer. It depends on Mg(2+) as a cofactor.

The catalysed reaction is [HPr protein]-L-serine + ATP = [HPr protein]-O-phospho-L-serine + ADP + H(+). It carries out the reaction [HPr protein]-O-phospho-L-serine + phosphate + H(+) = [HPr protein]-L-serine + diphosphate. In terms of biological role, catalyzes the ATP- as well as the pyrophosphate-dependent phosphorylation of a specific serine residue in HPr, a phosphocarrier protein of the phosphoenolpyruvate-dependent sugar phosphotransferase system (PTS). HprK/P also catalyzes the pyrophosphate-producing, inorganic phosphate-dependent dephosphorylation (phosphorolysis) of seryl-phosphorylated HPr (P-Ser-HPr). The protein is HPr kinase/phosphorylase of Polaromonas sp. (strain JS666 / ATCC BAA-500).